A 443-amino-acid polypeptide reads, in one-letter code: Putative metabolite transport protein YaaU (443 aa).

At 1–18 the chain is on the cytoplasmic side; the sequence is MQPSRNFDDLKFSSIHRR. A helical membrane pass occupies residues 19–39; sequence ILLWGSGGPFLDGYVLVMIGV. At 40–53 the chain is on the periplasmic side; that stretch reads ALEQLTPALKLDAD. Residues 54 to 74 traverse the membrane as a helical segment; it reads WIGLLGAGTLAGLFVGTSLFG. At 75–84 the chain is on the cytoplasmic side; that stretch reads YISDKVGRRK. A helical membrane pass occupies residues 85–105; the sequence is MFLIDIIAIGVISVATMFVSS. Topologically, residues 106–113 are periplasmic; the sequence is PVELLVMR. Residues 114-134 form a helical membrane-spanning segment; the sequence is VLIGIVIGADYPIATSMITEF. The Cytoplasmic segment spans residues 135–145; that stretch reads SSTRQRAFSIS. The helical transmembrane segment at 146–166 threads the bilayer; sequence FIAAMWYVGATCADLVGYWLY. The Periplasmic segment spans residues 167–173; sequence DVEGGWR. A helical transmembrane segment spans residues 174-194; sequence WMLGSAAIPCLLILIGRFELP. Residues 195–241 lie on the Cytoplasmic side of the membrane; it reads ESPRWLLRKGRVKECEEMMIKLFGEPVAFDEEQPQQTRFRDLFNRRH. A helical transmembrane segment spans residues 242 to 262; it reads FPFVLFVAAIWTCQVIPMFAI. At 263-282 the chain is on the periplasmic side; the sequence is YTFGPQIVGLLGLGVGKNAA. A helical transmembrane segment spans residues 283 to 303; that stretch reads LGNVVISLFFMLGCIPPMLWL. Residues 304–309 are Cytoplasmic-facing; the sequence is NTAGRR. The chain crosses the membrane as a helical span at residues 310–329; it reads PLLIGSFAMMTLALAVLGLI. Over 330–334 the chain is Periplasmic; that stretch reads PDMGI. Residues 335 to 357 traverse the membrane as a helical segment; that stretch reads WLVVMAFAVYAFFSGGPGNLQWL. At 358–373 the chain is on the cytoplasmic side; the sequence is YPNELFPTDIRASAVG. A helical membrane pass occupies residues 374-394; that stretch reads VIMSLSRIGTIVSTWALPIFI. Topologically, residues 395–401 are periplasmic; the sequence is NNYGISN. Residues 402–422 form a helical membrane-spanning segment; sequence TMLMGAGISLFGLLISVAFAP. At 423–443 the chain is on the cytoplasmic side; that stretch reads ETRGMSLAQTSNMTIRGQRMG.

This sequence belongs to the major facilitator superfamily. Sugar transporter (TC 2.A.1.1) family.

Its subcellular location is the cell inner membrane. The protein is Putative metabolite transport protein YaaU (yaaU) of Escherichia coli (strain K12).